Consider the following 294-residue polypeptide: Antiviral protein alpha (294 aa).

Residues methionine 1–alanine 24 form the signal peptide. 2 disulfide bridges follow: cysteine 58–cysteine 282 and cysteine 108–cysteine 130. Glutamate 199 is an active-site residue. Residues tyrosine 286–leucine 294 constitute a propeptide that is removed on maturation.

The protein belongs to the ribosome-inactivating protein family. Type 1 RIP subfamily. As to quaternary structure, monomer.

The protein resides in the secreted. The protein localises to the cell wall. The catalysed reaction is Endohydrolysis of the N-glycosidic bond at one specific adenosine on the 28S rRNA.. Inhibits viral infection of plants, and protein synthesis in vitro. Has also been shown to inhibit the replication of mammalian viruses. The protein may provide a means of cellular suicide upon invasion by a virus. The chain is Antiviral protein alpha from Phytolacca americana (American pokeweed).